Reading from the N-terminus, the 399-residue chain is Enoyl-[acyl-carrier-protein] reductase [NADH] (399 aa).

Residues 48 to 53, 74 to 75, 111 to 112, and 139 to 140 contribute to the NAD(+) site; these read GASTGY, FE, DA, and LA. Residue Tyr225 coordinates substrate. Tyr235 acts as the Proton donor in catalysis. NAD(+)-binding positions include Lys244 and 274-276; that span reads VVT.

This sequence belongs to the TER reductase family. Monomer.

It carries out the reaction a 2,3-saturated acyl-[ACP] + NAD(+) = a (2E)-enoyl-[ACP] + NADH + H(+). It functions in the pathway lipid metabolism; fatty acid biosynthesis. Involved in the final reduction of the elongation cycle of fatty acid synthesis (FAS II). Catalyzes the reduction of a carbon-carbon double bond in an enoyl moiety that is covalently linked to an acyl carrier protein (ACP). This chain is Enoyl-[acyl-carrier-protein] reductase [NADH], found in Yersinia pseudotuberculosis serotype O:1b (strain IP 31758).